A 93-amino-acid polypeptide reads, in one-letter code: UPF0358 protein LMHCC_1561 (93 aa).

Belongs to the UPF0358 family.

The chain is UPF0358 protein LMHCC_1561 from Listeria monocytogenes serotype 4a (strain HCC23).